Consider the following 354-residue polypeptide: 4-hydroxy-3-methylbut-2-en-1-yl diphosphate synthase (flavodoxin) (354 aa).

Residues Cys262, Cys265, Cys297, and Glu304 each coordinate [4Fe-4S] cluster.

The protein belongs to the IspG family. The cofactor is [4Fe-4S] cluster.

It carries out the reaction (2E)-4-hydroxy-3-methylbut-2-enyl diphosphate + oxidized [flavodoxin] + H2O + 2 H(+) = 2-C-methyl-D-erythritol 2,4-cyclic diphosphate + reduced [flavodoxin]. It participates in isoprenoid biosynthesis; isopentenyl diphosphate biosynthesis via DXP pathway; isopentenyl diphosphate from 1-deoxy-D-xylulose 5-phosphate: step 5/6. Functionally, converts 2C-methyl-D-erythritol 2,4-cyclodiphosphate (ME-2,4cPP) into 1-hydroxy-2-methyl-2-(E)-butenyl 4-diphosphate. This is 4-hydroxy-3-methylbut-2-en-1-yl diphosphate synthase (flavodoxin) from Helicobacter hepaticus (strain ATCC 51449 / 3B1).